The chain runs to 274 residues: Large ribosomal subunit protein uL2cz/uL2cy (274 aa).

Disordered stretches follow at residues M1–S24 and M223–K274. Residues K7 to S24 are compositionally biased toward polar residues.

It belongs to the universal ribosomal protein uL2 family. As to quaternary structure, part of the 50S ribosomal subunit.

It localises to the plastid. The protein resides in the chloroplast. The sequence is that of Large ribosomal subunit protein uL2cz/uL2cy (rpl2-A) from Nicotiana sylvestris (Wood tobacco).